A 626-amino-acid chain; its full sequence is MQRADSEQPSKRPRCDDSPRTPSNTPSAEADWSPGLELHPDYKTWGPEQVCSFLRRGGFEEPVLLKNIRENEITGALLPCLDESRFENLGVSSLGERKKLLSYIQRLVQIHVDTMKVINDPIHGHIELHPLLVRIIDTPQFQRLRYIKQLGGGYYVFPGASHNRFEHSLGVGYLAGCLVHALGEKQPELQISERDVLCVQIAGLCHDLGHGPFSHMFDGRFIPLARPEVKWTHEQGSVMMFEHLINSNGIKPVMEQYGLIPEEDICFIKEQIVGPLESPVEDSLWPYKGRPENKSFLYEIVSNKRNGIDVDKWDYFARDCHHLGIQNNFDYKRFIKFARVCEVDNELRICARDKEVGNLYDMFHTRNSLHRRAYQHKVGNIIDTMITDAFLKADDYIEITGAGGKKYRISTAIDDMEAYTKLTDNIFLEILYSTDPKLKDAREILKQIEYRNLFKYVGETQPTGQIKIKREDYESLPKEVASAKPKVLLDVKLKAEDFIVDVINMDYGMQEKNPIDHVSFYCKTAPNRAIRITKNQVSQLLPEKFAEQLIRVYCKKVDRKSLYAARQYFVQWCADRNFTKPQDGDVIAPLITPQKKEWNDSTSVQNPTRLREASKSRVQLFKDDPM.

Met1 is modified (N-acetylmethionine). Positions 1–19 (MQRADSEQPSKRPRCDDSP) are enriched in basic and acidic residues. The disordered stretch occupies residues 1–36 (MQRADSEQPSKRPRCDDSPRTPSNTPSAEADWSPGL). Phosphoserine is present on Ser18. Phosphothreonine is present on residues Thr21 and Thr25. Residues Ser33 and Ser93 each carry the phosphoserine modification. Residues 45–110 (WGPEQVCSFL…LSYIQRLVQI (66 aa)) enclose the SAM domain. GTP-binding residues include Lys116 and Val117. Asn119 is a binding site for dATP. Asn119 is a binding site for dCTP. Residue Asn119 coordinates dGTP. Asn119 contributes to the dTTP binding site. 3 residues coordinate GTP: Asp137, Gln142, and Arg145. Residue Gln149 participates in dATP binding. Gln149 is a dCTP binding site. Gln149, Leu150, Val156, and Arg164 together coordinate dGTP. Gln149 contacts dTTP. The dATP site is built by Val156 and Arg164. Residues Val156 and Arg164 each contribute to the dCTP site. Positions 156 and 164 each coordinate dTTP. Positions 164–316 (RFEHSLGVGY…GIDVDKWDYF (153 aa)) constitute an HD domain. Residues His167, His206, and Asp207 each coordinate Mn(2+). DATP contacts are provided by His210 and His215. Residues His210 and His215 each contribute to the dCTP site. DTTP contacts are provided by His210 and His215. His233 is an active-site residue. Asp311 is a Mn(2+) binding site. DATP is bound by residues Lys312, Tyr315, Asp319, Arg333, Arg352, Lys354, Asn358, and Arg366. Lys312, Tyr315, Asp319, Arg333, Arg352, and Lys354 together coordinate dCTP. Residues Lys312, Tyr315, Asp319, Arg333, Arg352, Lys354, Asn358, and Arg366 each coordinate dGTP. 6 residues coordinate dTTP: Lys312, Tyr315, Asp319, Arg333, Arg352, and Lys354. Residues Arg366 and Arg372 each contribute to the dCTP site. The dGTP site is built by Tyr374, Gln375, His376, and Lys377. Positions 375, 376, and 377 each coordinate dATP. Residues Gln375, His376, and Lys377 each coordinate dCTP. DTTP is bound by residues Gln375, His376, and Lys377. Residues Arg451 and Lys455 each coordinate GTP. Glycyl lysine isopeptide (Lys-Gly) (interchain with G-Cter in SUMO2) cross-links involve residues Lys467, Lys469, and Lys492. Position 523 (Lys523) interacts with GTP. Lys523 is a binding site for dATP. Lys523 is a dCTP binding site. Lys523 lines the dGTP pocket. DTTP is bound at residue Lys523. Residue Thr592 is modified to (Microbial infection) Phosphothreonine. Thr592 is subject to Phosphothreonine; by CDK1. Lys622 is covalently cross-linked (Glycyl lysine isopeptide (Lys-Gly) (interchain with G-Cter in SUMO2)).

The protein belongs to the SAMHD1 family. As to quaternary structure, homodimer; in absence of GTP and dNTP. Homotetramer; in GTP- and dNTP-bound form. Interacts with MRE11; leading to stimulate the exonuclease activity of MRE11. Interacts with RBBP8/CtIP. Interacts (via its C-terminus) with CD81. (Microbial infection) Interacts with HIV-2 viral protein Vpx; promoting interaction with a E3 ubiquitin-protein ligase complex containing DCAF1, leading to subsequent ubiquitination and degradation of SAMHD1. Requires Mn(2+) as cofactor. Phosphorylation at Thr-592 by CDK1 acts as a switch to control deoxynucleoside triphosphate (dNTPase)-dependent and -independent functions. Phosphorylation at Thr-592 takes place in cycling cells: it reduces the stability of the homotetramer, impairing the dNTPase activity and subsequent ability to restrict infection by viruses. It also inhibits ability to suppress LINE-1 retrotransposon activity. In contrast, phosphorylation at Thr-592 promotes DNA end resection at stalled replication forks in response to DNA damage. Post-translationally, (Microbial infection) Phosphorylation at Thr-592 by Epstein-Barr virus kinase BGLF4 and human cytomegalovirus/HCMV UL97 leads to a reduced level of dCTPase and dTTPase activity and the loss of viral restriction. In terms of processing, (Microbial infection) Ubiquitinated following interaction with HIV-2 viral protein Vpx; Vpx promotes interaction and with a DCX (DDB1-CUL4-X-box) E3 ubiquitin ligase, leading to proteasomal degradation. In terms of tissue distribution, expressed in heart, skeletal muscle, spleen, liver, small intestine, placenta, lung and peripheral blood leukocytes. No expression is seen in brain and thymus.

Its subcellular location is the nucleus. It is found in the chromosome. It catalyses the reaction a 2'-deoxyribonucleoside 5'-triphosphate + H2O = a 2'-deoxyribonucleoside + triphosphate + H(+). The catalysed reaction is dATP + H2O = 2'-deoxyadenosine + triphosphate + H(+). The enzyme catalyses dCTP + H2O = 2'-deoxycytidine + triphosphate + H(+). It carries out the reaction dGTP + H2O = 2'-deoxyguanosine + triphosphate + H(+). It catalyses the reaction dTTP + H2O = thymidine + triphosphate + H(+). Allosterically activated and regulated via the combined actions of GTP and dNTPs (dATP, dGTP, dTTP and dCTP): Allosteric site 1 binds GTP, while allosteric site 2 binds dNTP. Allosteric activation promotes the formation of highly active homotetramers. Phosphorylation at Thr-592 impairs homotetramerization, thereby inhibiting dNTPase activity, leading to reduced ability to restrict infection by viruses. Its function is as follows. Protein that acts both as a host restriction factor involved in defense response to virus and as a regulator of DNA end resection at stalled replication forks. Has deoxynucleoside triphosphate (dNTPase) activity, which is required to restrict infection by viruses, such as HIV-1: dNTPase activity reduces cellular dNTP levels to levels too low for retroviral reverse transcription to occur, blocking early-stage virus replication in dendritic and other myeloid cells. Likewise, suppresses LINE-1 retrotransposon activity. Not able to restrict infection by HIV-2 virus; because restriction activity is counteracted by HIV-2 viral protein Vpx. In addition to virus restriction, dNTPase activity acts as a regulator of DNA precursor pools by regulating dNTP pools. Phosphorylation at Thr-592 acts as a switch to control dNTPase-dependent and -independent functions: it inhibits dNTPase activity and ability to restrict infection by viruses, while it promotes DNA end resection at stalled replication forks. Functions during S phase at stalled DNA replication forks to promote the resection of gapped or reversed forks: acts by stimulating the exonuclease activity of MRE11, activating the ATR-CHK1 pathway and allowing the forks to restart replication. Its ability to promote degradation of nascent DNA at stalled replication forks is required to prevent induction of type I interferons, thereby preventing chronic inflammation. Ability to promote DNA end resection at stalled replication forks is independent of dNTPase activity. Enhances immunoglobulin hypermutation in B-lymphocytes by promoting transversion mutation. The sequence is that of Deoxynucleoside triphosphate triphosphohydrolase SAMHD1 from Homo sapiens (Human).